The primary structure comprises 461 residues: Glycine--tRNA ligase (461 aa).

Residues Arg-100 and Glu-174 each contribute to the substrate site. ATP is bound by residues 206–208 (RNE), 216–221 (FRTREF), 290–291 (EL), and 334–337 (GVDR). 221 to 225 (FEQME) contacts substrate. 330 to 334 (EPSVG) contacts substrate.

This sequence belongs to the class-II aminoacyl-tRNA synthetase family. As to quaternary structure, homodimer.

It is found in the cytoplasm. The enzyme catalyses tRNA(Gly) + glycine + ATP = glycyl-tRNA(Gly) + AMP + diphosphate. In terms of biological role, catalyzes the attachment of glycine to tRNA(Gly). The sequence is that of Glycine--tRNA ligase from Caldanaerobacter subterraneus subsp. tengcongensis (strain DSM 15242 / JCM 11007 / NBRC 100824 / MB4) (Thermoanaerobacter tengcongensis).